Here is a 275-residue protein sequence, read N- to C-terminus: Putative protein A464R (275 aa).

Residues 51 to 175 (KEDVEYLIGM…LMGAIYFDLG (125 aa)) form the RNase III domain. In terms of domain architecture, DRBM spans 201-269 (NYKDRLLKHT…SKIALHTMGV (69 aa)).

Belongs to the ribonuclease III family.

The protein is Putative protein A464R of Chlorella (PBCV-1).